The primary structure comprises 463 residues: Chromogranin-A (463 aa).

An N-terminal signal peptide occupies residues 1-18 (MRSTAVLALLLCAGQVFA). Cysteines 35 and 56 form a disulfide. The disordered stretch occupies residues 88–440 (KERAQQPLKQ…ANRRAEDQEL (353 aa)). A compositionally biased stretch (low complexity) spans 92 to 116 (QQPLKQQQPPKQQQQQQQQQQQEQQ). At serine 119 the chain carries Phosphoserine. Positions 134–160 (DAKHRDAAAEVPSRDTMEKRKDSDKGQ) are enriched in basic and acidic residues. Residues 196-208 (TATNTQSPTSLPS) show a composition bias toward polar residues. Phosphoserine is present on residues serine 220, serine 282, and serine 308. A compositionally biased stretch (basic and acidic residues) spans 301 to 310 (GKGELEHSQQ). Position 329 is a glycine amide (glycine 329). Basic and acidic residues-rich tracts occupy residues 331 to 340 (KGRELEHKQE) and 348 to 375 (RLSREWEDKRWSRMDQLAKELTAEKRLE). Phosphoserine is present on residues serine 350 and serine 383. Methionine 384 is subject to Methionine sulfoxide. The span at 409–437 (SSREDSVEARSDFEEKKEEEGSANRRAED) shows a compositional bias: basic and acidic residues. Residues serine 410, serine 414, and serine 430 each carry the phosphoserine modification. Serine 430 carries an O-linked (Xyl...) (chondroitin sulfate) serine glycan. Residue glutamine 438 is modified to Pyrrolidone carboxylic acid. At serine 444 the chain carries Phosphoserine.

It belongs to the chromogranin/secretogranin protein family. As to quaternary structure, self-interacts; self-assembly is promoted in vitro by chondroitin sulfate attachment which occurs at mildly acidic pH conditions. Interacts with SCG3; this interaction is optimal in conditions mimicking the lumenal milieu of the trans-Golgi network, i.e. pH 5.5 and 10 mM Ca(+2). Interacts with ITPR1 in the secretory granules. Post-translationally, O-glycosylated; contains chondroitin sulfate (CS). CS attachment is pH-dependent, being observed at mildly acidic conditions of pH 5 but not at neutral pH, and promotes self-assembly in vitro.

It localises to the cytoplasmic vesicle. It is found in the secretory vesicle. The protein localises to the neuronal dense core vesicle. The protein resides in the secreted. Its function is as follows. Strongly inhibits glucose induced insulin release from the pancreas. Functionally, inhibits catecholamine release from chromaffin cells and noradrenergic neurons by acting as a non-competitive nicotinic cholinergic antagonist. Can induce mast cell migration, degranulation and production of cytokines and chemokines. In terms of biological role, regulates granule biogenesis in endocrine cells by up-regulating the transcription of protease nexin 1 (SERPINE2) via a cAMP-PKA-SP1 pathway. This leads to inhibition of granule protein degradation in the Golgi complex which in turn promotes granule formation. Pyroglutaminated (pGlu)-serpinin exerts an antiapoptotic effect on cells exposed to oxidative stress. The polypeptide is Chromogranin-A (Chga) (Mus musculus (Mouse)).